The following is a 102-amino-acid chain: RNA-binding protein Hfq (102 aa).

Residues 9–68 (DPFLNALRRERVPVSIYLVNGIKLQGQIESFDQFVILLKNTVSQMVYKHAISTVVPSRPV) form the Sm domain. The segment at 63 to 102 (VPSRPVSHHSNNASGGTSSNYHHGSSAQNTSAQQDSEETE) is disordered. Positions 70-96 (HHSNNASGGTSSNYHHGSSAQNTSAQQ) are enriched in polar residues.

This sequence belongs to the Hfq family. In terms of assembly, homohexamer.

In terms of biological role, RNA chaperone that binds small regulatory RNA (sRNAs) and mRNAs to facilitate mRNA translational regulation in response to envelope stress, environmental stress and changes in metabolite concentrations. Also binds with high specificity to tRNAs. This Shigella boydii serotype 18 (strain CDC 3083-94 / BS512) protein is RNA-binding protein Hfq.